Here is a 653-residue protein sequence, read N- to C-terminus: Transmembrane and coiled-coil domains protein 1 (653 aa).

Met1 bears the N-acetylmethionine mark. 4 disordered regions span residues 1-35 (MEPS…QKLS), 58-78 (HQRR…ADPE), 112-165 (PPKM…APTS), and 204-227 (TSSA…TPDP). Residues 1-591 (MEPSGSEQLF…ARNLLGKLIN (591 aa)) lie on the Cytoplasmic side of the membrane. Residues 20-34 (QDAEARKQTESEQKL) show a composition bias toward basic and acidic residues. Over residues 64–74 (SVSPHDVQQIQ) the composition is skewed to polar residues. The segment covering 113-125 (PKMKRGTSLHSRR) has biased composition (basic residues). Positions 135 to 144 (PQINRKSGQE) are enriched in polar residues. Positions 153 to 165 (RPRSSSTTDAPTS) are enriched in low complexity. The span at 204 to 218 (TSSAVASSTDGSIHT) shows a compositional bias: polar residues. Residues 228–313 (QRTKAAIAHL…RKLREVEQNG (86 aa)) adopt a coiled-coil conformation. Residues Ser382 and Ser414 each carry the phosphoserine modification. The interval 415-437 (PKYGSEEDCSSATSGSVGANSTT) is disordered. Residues 424–437 (SSATSGSVGANSTT) show a composition bias toward polar residues. A coiled-coil region spans residues 458–576 (GFDALLHEIQ…QQQQVVQLEG (119 aa)). 2 consecutive transmembrane segments (helical) span residues 592–612 (ILLA…NCVV) and 625–645 (LFLV…FSYV). The Cytoplasmic segment spans residues 646 to 653 (ERFFSSPR).

It belongs to the TEX28 family. As to quaternary structure, may form homodimers and heterodimers with TMCC2 or TMCC3 via the coiled-coil domains. Interacts with ribosomal proteins RPL4 and RPS6.

The protein localises to the endoplasmic reticulum membrane. Its function is as follows. Endoplasmic reticulum membrane protein that promotes endoplasmic reticulum-associated endosome fission. Localizes to contact sites between the endoplasmic reticulum and endosomes and acts by promoting recruitment of the endoplasmic reticulum to endosome tubules for fission. Endosome membrane fission of early and late endosomes is essential to separate regions destined for lysosomal degradation from carriers to be recycled to the plasma membrane. This Homo sapiens (Human) protein is Transmembrane and coiled-coil domains protein 1.